Reading from the N-terminus, the 306-residue chain is D-alanine--D-alanine ligase (306 aa).

Residues 101–300 (RIMLAAAGVP…FGELVTWMVE (200 aa)) enclose the ATP-grasp domain. Position 128–182 (128–182 (MPTPYVLKPNAGGSSVGVFIVREDQAHPPQELTREDWPHGENLLAEEFIPGLELT)) interacts with ATP. Mg(2+) contacts are provided by Asp-250, Glu-267, and Asn-269.

This sequence belongs to the D-alanine--D-alanine ligase family. It depends on Mg(2+) as a cofactor. The cofactor is Mn(2+).

Its subcellular location is the cytoplasm. It catalyses the reaction 2 D-alanine + ATP = D-alanyl-D-alanine + ADP + phosphate + H(+). It participates in cell wall biogenesis; peptidoglycan biosynthesis. Its function is as follows. Cell wall formation. This Xanthobacter autotrophicus (strain ATCC BAA-1158 / Py2) protein is D-alanine--D-alanine ligase.